A 283-amino-acid polypeptide reads, in one-letter code: Pantothenate synthetase (283 aa).

26–33 (MGNLHEGH) provides a ligand contact to ATP. The active-site Proton donor is His33. Position 57 (Gln57) interacts with (R)-pantoate. Beta-alanine is bound at residue Gln57. 144–147 (GKKD) contacts ATP. Gln150 serves as a coordination point for (R)-pantoate. Residues Ile173 and 181–184 (LSSR) each bind ATP.

It belongs to the pantothenate synthetase family. In terms of assembly, homodimer.

The protein localises to the cytoplasm. It catalyses the reaction (R)-pantoate + beta-alanine + ATP = (R)-pantothenate + AMP + diphosphate + H(+). Its pathway is cofactor biosynthesis; (R)-pantothenate biosynthesis; (R)-pantothenate from (R)-pantoate and beta-alanine: step 1/1. In terms of biological role, catalyzes the condensation of pantoate with beta-alanine in an ATP-dependent reaction via a pantoyl-adenylate intermediate. In Polynucleobacter necessarius subsp. necessarius (strain STIR1), this protein is Pantothenate synthetase.